We begin with the raw amino-acid sequence, 870 residues long: MNSNLPAENLTIAVNMTKTLPTAVTHGFNSTNDPPSMSITRLFPALLECFGIVLCGYIAGRANVITSTQAKGLGNFVSRFALPALLFKNMVVLNFSNVDWSFLYSILIAKASVFFIVCVLTLLVASPDSRFSKAGLFPIFATQSNDFALGYPIVEALYQTTYPEYLQYIYLVAPISLMMLNPIGFIFCEIQKWKDTQNASQNKIKIVGLGLLRVLQNPIVFMVFIGIAFNFILDRKVPVYVENFLDGLGNSFSGSALFYLGLTMVGKIKRLKKSAFVVLILLITAKLLVLPLLCREMVELLDKGDSVVNHTSLSNYAFLYGVFPVAPGVAIFATQFNMEVEIITSGMVISTFVSAPIMYVSAWLLTFPTMDPKPLAYAIQNVSFDISIVSLISLIWSLAILLLSKKYKQLPHMLTTNLLIAQSIVCAGMMIWNFVKEKNFVGQILVFVLLYSSLYSTYLWTGLLAISLFLLKKRERVQIPVGIIIISGWGIPALLVGVLLITGKHNGDSIDSAFFYGKEQMITTAVTLFCSILIAGISLMCMNQTAQAGSYEGFDQSQSHKVVEPGNTAFEESPAPVNEPELFTSSIPETSCCSCSMGNGELHCPSIEPIANTSTSEPVIPSFEKNNHCVSRCNSQSCILAQEEEQYLQSGDQQLTRHVLLCLLLIIGLFANLSSCLWWLFNQEPGRLYVELQFFCAVFNFGQGFISFGIFGLDKHLIILPFKRRLEFLWNNKDTAENRDSPVSEEIKMTCQQFIHYHRDLCIRNIVKERRCGAKTSAGTFCGCDLVSWLIEVGLASDRGEAVIYGDRLVQGGVIQHITNEYEFRDEYLFYRFLQKSPEQSPPAINANTLQQERYKEIEHSSPPSHSPKT.

Residues 1-38 (MNSNLPAENLTIAVNMTKTLPTAVTHGFNSTNDPPSMS) are Lumenal-facing. The segment at 1–370 (MNSNLPAENL…SAWLLTFPTM (370 aa)) is PIN-like transporter. Asn9, Asn15, and Asn29 each carry an N-linked (GlcNAc...) asparagine glycan. A helical membrane pass occupies residues 39 to 59 (ITRLFPALLECFGIVLCGYIA). The cholesterol site is built by Phe43 and Tyr57. Residues 60 to 79 (GRANVITSTQAKGLGNFVSR) are Cytoplasmic-facing. A helical transmembrane segment spans residues 80-100 (FALPALLFKNMVVLNFSNVDW). Over 101–104 (SFLY) the chain is Lumenal. Residues 105–125 (SILIAKASVFFIVCVLTLLVA) form a helical membrane-spanning segment. Over 126–133 (SPDSRFSK) the chain is Cytoplasmic. A discontinuously helical membrane pass occupies residues 134–154 (AGLFPIFATQSNDFALGYPIV). Residues 155 to 167 (EALYQTTYPEYLQ) are Lumenal-facing. Residues 168-188 (YIYLVAPISLMMLNPIGFIFC) form a helical membrane-spanning segment. Residues 189–213 (EIQKWKDTQNASQNKIKIVGLGLLR) are Cytoplasmic-facing. The chain crosses the membrane as a discontinuously helical span at residues 214 to 234 (VLQNPIVFMVFIGIAFNFILD). The Lumenal segment spans residues 235–243 (RKVPVYVEN). The discontinuously helical transmembrane segment at 244–264 (FLDGLGNSFSGSALFYLGLTM) threads the bilayer. Residues 265–273 (VGKIKRLKK) lie on the Cytoplasmic side of the membrane. Residues Gly266, Lys267, and Ile268 each contribute to the cholesterol site. Residues 274-294 (SAFVVLILLITAKLLVLPLLC) traverse the membrane as a helical segment. Residues 295–315 (REMVELLDKGDSVVNHTSLSN) lie on the Lumenal side of the membrane. N-linked (GlcNAc...) asparagine glycosylation is present at Asn309. The chain crosses the membrane as a discontinuously helical span at residues 316–336 (YAFLYGVFPVAPGVAIFATQF). The Cytoplasmic portion of the chain corresponds to 337–346 (NMEVEIITSG). Residues 347–367 (MVISTFVSAPIMYVSAWLLTF) form a helical membrane-spanning segment. The Lumenal segment spans residues 368–381 (PTMDPKPLAYAIQN). Positions 380-717 (QNVSFDISIV…FGIFGLDKHL (338 aa)) are GPCR. N-linked (GlcNAc...) asparagine glycosylation occurs at Asn381. The chain crosses the membrane as a helical span at residues 382–402 (VSFDISIVSLISLIWSLAILL). Over 403 to 414 (LSKKYKQLPHML) the chain is Cytoplasmic. The chain crosses the membrane as a helical span at residues 415 to 435 (TTNLLIAQSIVCAGMMIWNFV). At 436-438 (KEK) the chain is on the lumenal side. The helical transmembrane segment at 439 to 459 (NFVGQILVFVLLYSSLYSTYL) threads the bilayer. Residues 460-480 (WTGLLAISLFLLKKRERVQIP) lie on the Cytoplasmic side of the membrane. Residues 481-501 (VGIIIISGWGIPALLVGVLLI) form a helical membrane-spanning segment. The Lumenal portion of the chain corresponds to 502-520 (TGKHNGDSIDSAFFYGKEQ). A helical transmembrane segment spans residues 521–541 (MITTAVTLFCSILIAGISLMC). At 542 to 660 (MNQTAQAGSY…GDQQLTRHVL (119 aa)) the chain is on the cytoplasmic side. Arg657 contacts cholesterol. The helical transmembrane segment at 661–681 (LCLLLIIGLFANLSSCLWWLF) threads the bilayer. Residues 682–691 (NQEPGRLYVE) are Lumenal-facing. A helical transmembrane segment spans residues 692–712 (LQFFCAVFNFGQGFISFGIFG). Over 713-870 (LDKHLIILPF…SSPPSHSPKT (158 aa)) the chain is Cytoplasmic. The DEP domain maps to 757–835 (YHRDLCIRNI…DEYLFYRFLQ (79 aa)).

As to quaternary structure, homodimer; via the transporter region and DEP domain. Interacts with the GATOR1 complex and prevents interaction between GATOR1 and KICSTOR; this interaction is disrupted upon cholesterol starvation.

It localises to the lysosome membrane. Its function is as follows. Cholesterol-binding protein that acts as a regulator of mTORC1 signaling pathway. Acts as a sensor of cholesterol to signal cholesterol sufficiency to mTORC1: in presence of cholesterol, binds cholesterol, leading to disruption of the interaction between the GATOR1 and KICSTOR complexes and promotion of mTORC1 signaling. Upon cholesterol starvation, GPR155/LYCHOS is unable to perturb the association between GATOR1 and KICSTOR, leading to mTORC1 signaling inhibition. Binds indole-3-acetic acid and may play a role in tryptophan metabolism. The protein is Lysosomal cholesterol signaling protein of Homo sapiens (Human).